The sequence spans 634 residues: Beta-ketoacyl-[acyl-carrier-protein] synthase FabY (634 aa).

The Ketosynthase family 3 (KS3) domain maps to 78–546 (ERIFASTLVR…GNNASGVVLS (469 aa)). Residues Cys281, His434, and His472 each act as for beta-ketoacyl synthase activity in the active site.

It belongs to the thiolase-like superfamily. Beta-ketoacyl-ACP synthases family. Homodimer.

It carries out the reaction malonyl-[ACP] + acetyl-CoA + H(+) = 3-oxobutanoyl-[ACP] + CO2 + CoA. It functions in the pathway lipid metabolism; fatty acid biosynthesis. Involved in the initiation of the fatty acid biosynthesis. Catalyzes the condensation of acetyl coenzyme A (acetyl-CoA) with malonyl-acyl carrier protein (ACP) to make the fatty acid synthesis (FAS) primer beta-acetoacetyl-ACP. It can also use short-chain acyl-CoA as substrates, including butyryl-CoA, and hexanoyl-CoA, but does not use any of the longer chain acyl-CoA substrates. In Pseudomonas aeruginosa (strain ATCC 15692 / DSM 22644 / CIP 104116 / JCM 14847 / LMG 12228 / 1C / PRS 101 / PAO1), this protein is Beta-ketoacyl-[acyl-carrier-protein] synthase FabY (fabY).